We begin with the raw amino-acid sequence, 2058 residues long: E3 ubiquitin-protein ligase ubr-1 (2058 aa).

The UBR-type zinc-finger motif lies at 93 to 164; sequence QICGHVFKNG…EGYACANHEK (72 aa). Residues 1107-1175 are disordered; sequence VPEAAPAPEN…TPSEKSETVV (69 aa). The segment covering 1108–1119 has biased composition (low complexity); the sequence is PEAAPAPENKPA. 2 stretches are compositionally biased toward basic and acidic residues: residues 1123-1138 and 1153-1175; these read EEIK…EMRQ and KKIE…ETVV. Residues 1217–1335 form an RING-type; atypical zinc finger; that stretch reads LTCILCQEDE…GEYQCPLCKR (119 aa). Disordered regions lie at residues 1381–1416 and 1475–1499; these read LSSE…DTAN and PAAT…ESGK. Residues 1388–1397 are compositionally biased toward basic residues; it reads KKGHSRKRSH. Basic and acidic residues predominate over residues 1398–1413; it reads SERSLLDLEKLSKDPD. A compositionally biased stretch (polar residues) spans 1486–1495; the sequence is GSSSRIPESQ. The helical transmembrane segment at 1695–1715 threads the bilayer; that stretch reads ILQIDILSLAISLMMTIGWTW.

It belongs to the E3 ubiquitin-protein ligase UBR1-like family. In terms of assembly, interacts with ubc-1. Component of a complex containing at least ced-3, ubr-1 and possibly ate-1. Within complex interacts with ced-3 (via the p17 subunit); this interaction is required for the ced-3-mediated cleavage and subsequent degradation of the heterochronic protein lin-28. In terms of tissue distribution, expressed in pharyngeal muscles, body wall muscles and a subset of neurons throughout postembryonic development. Prominently expressed in premotor interneurons, but not expressed in ventral cord motor neurons. Weakly expressed in hypodermal seam cells.

It localises to the membrane. The catalysed reaction is S-ubiquitinyl-[E2 ubiquitin-conjugating enzyme]-L-cysteine + [acceptor protein]-L-lysine = [E2 ubiquitin-conjugating enzyme]-L-cysteine + N(6)-ubiquitinyl-[acceptor protein]-L-lysine.. It participates in protein modification; protein ubiquitination. Functionally, E3 ubiquitin-protein ligase which is a component of the N-end rule pathway. Recognizes and binds to proteins bearing specific N-terminal residues that are destabilizing according to the N-end rule, leading to their ubiquitination and subsequent degradation. In complex with ced-3, required for the ced-3-mediated cleavage and subsequent degradation of the heterochronic protein lin-28 to regulate seam cell fate patterning during larval development. Negatively regulates glutamate metabolism through the aspartate aminotransferase got-1.2. Modulation of glutamate levels most likely controls locomotory behavior, in particular backwards locomotion or 'reversals'. This Caenorhabditis elegans protein is E3 ubiquitin-protein ligase ubr-1.